Consider the following 445-residue polypeptide: Gasdermin-A (445 aa).

Residues 1 to 251 (MTMFENVTRA…VILIQASDVG (251 aa)) form a triggers pyroptosis region. 9-13 (RALAR) contributes to the a cardiolipin binding site. A run of 4 beta stranded transmembrane segments spans residues 78–95 (NFGF…DVDV), 99–120 (VKVK…TLSV), 163–179 (VTLE…SLPF), and 183–197 (LGLQ…AVTI).

The protein belongs to the gasdermin family. Homooligomer; homooligomeric ring-shaped pore complex containing 18-36 subunits when inserted in the membrane. Post-translationally, cleavage by S.pyogenes SpeB relieves autoinhibition by releasing the N-terminal moiety (Gasdermin-A, N-terminal) that initiates pyroptosis. Palmitoylated. Expressed predominantly in the gastrointestinal tract and, at a lower level, in the skin. Also detected in mammary gland. In the gastrointestinal tract, mainly expressed in differentiated cells, including the differentiated cell layer of esophagus and mucus-secreting pit cells of the gastric epithelium. Down-regulated in gastric cancer cells.

Its subcellular location is the cytoplasm. The protein localises to the perinuclear region. It is found in the cytosol. It localises to the cell membrane. Its activity is regulated as follows. The full-length protein before cleavage is inactive: intramolecular interactions between N- and C-terminal domains mediate autoinhibition in the absence of activation signal. The intrinsic pyroptosis-inducing activity is carried by the released N-terminal moiety (Gasdermin-A, N-terminal) following cleavage by S.pyogenes effector protein SpeB. Its function is as follows. This form constitutes the precursor of the pore-forming protein and acts as a sensor of infection: upon infection by S.pyogenes, specifically cleaved by S.pyogenes effector protein SpeB in epithelial cells, releasing the N-terminal moiety (Gasdermin-A, N-terminal) that binds to membranes and forms pores, triggering pyroptosis. Pore-forming protein that causes membrane permeabilization and pyroptosis. Released upon cleavage by S.pyogenes effector protein SpeB, and binds to membrane inner leaflet lipids. Homooligomerizes within the membrane and forms pores of 10-15 nanometers (nm) of inner diameter, triggering pyroptosis. Pyroptosis triggers the elimination of the infected skin cell, depriving the pathogen of its protective niche, while inducing an inflammatory response. This ultimately prevents bacterial penetration of the epithelial barrier and a subsequent systemic dissemination of the pathogen. Binds to cardiolipin and other acidic phospholipids, such as phosphatidylserine, which mediate its targeting to the inner leaflet membrane. The protein is Gasdermin-A of Homo sapiens (Human).